The sequence spans 227 residues: Potassium/proton antiporter CemA (227 aa).

Transmembrane regions (helical) follow at residues 5–25 (SISLLYLISIVFLPWCISFTF), 112–132 (IICFFILSGYSILGNQELILI), 143–163 (LSDTIKAFSILLLTDLCIGFH), and 187–207 (IISGLVSTFPVILDTIFKYWI).

This sequence belongs to the CemA family.

It is found in the plastid. The protein resides in the chloroplast inner membrane. It catalyses the reaction K(+)(in) + H(+)(out) = K(+)(out) + H(+)(in). Its function is as follows. Contributes to K(+)/H(+) antiport activity by supporting proton efflux to control proton extrusion and homeostasis in chloroplasts in a light-dependent manner to modulate photosynthesis. Prevents excessive induction of non-photochemical quenching (NPQ) under continuous-light conditions. Indirectly promotes efficient inorganic carbon uptake into chloroplasts. The sequence is that of Potassium/proton antiporter CemA from Phaseolus vulgaris (Kidney bean).